The sequence spans 566 residues: UvrABC system protein C (566 aa).

Residues 16–93 form the GIY-YIG domain; the sequence is EKPGVYLFKK…IQQYKPRYNV (78 aa). Positions 199–234 constitute a UVR domain; sequence AEVLPKLYEKIEEFSKELMFEKCAHIRDQIIALENL.

The protein belongs to the UvrC family. As to quaternary structure, interacts with UvrB in an incision complex.

It localises to the cytoplasm. The UvrABC repair system catalyzes the recognition and processing of DNA lesions. UvrC both incises the 5' and 3' sides of the lesion. The N-terminal half is responsible for the 3' incision and the C-terminal half is responsible for the 5' incision. The polypeptide is UvrABC system protein C (Aquifex aeolicus (strain VF5)).